Reading from the N-terminus, the 617-residue chain is E3 ubiquitin-protein ligase ORTHRUS 1 (617 aa).

The PHD-type zinc finger occupies 12 to 62 (DGVCMRCQVNPPSEETLTCGTCVTPWHVPCLLPESLASSTGEWECPDCSGV). An RING-type 1 zinc finger spans residues 129–169 (CSICIQLPERPITTPCGHNFCLKCFEKWAVGQGKLTCMICR). The YDG domain maps to 258 to 407 (TRKQGVLVGE…FKVCRYLFVR (150 aa)). Residues 495 to 552 (CQICREVLSLPVTTPCAHNFCKACLEAKFAGITQLRERSNGGRKLRAKKNIMTCPCCT) form an RING-type 2 zinc finger. Residues 563–593 (QVNREMMEIIENFKKSEEEADASISEEEEEE) adopt a coiled-coil conformation. Residues 575 to 617 (FKKSEEEADASISEEEEEESEPPTKKIKMDNNSVGGSGTSLSA) form a disordered region. The span at 580–595 (EEADASISEEEEEESE) shows a compositional bias: acidic residues. The segment covering 604-617 (DNNSVGGSGTSLSA) has biased composition (polar residues).

As to expression, expressed in inflorescences and leaves.

The protein localises to the nucleus. It carries out the reaction S-ubiquitinyl-[E2 ubiquitin-conjugating enzyme]-L-cysteine + [acceptor protein]-L-lysine = [E2 ubiquitin-conjugating enzyme]-L-cysteine + N(6)-ubiquitinyl-[acceptor protein]-L-lysine.. It functions in the pathway protein modification; protein ubiquitination. Functionally, E3 ubiquitin-protein ligase. Participates in CpG methylation-dependent transcriptional regulation and epigenetic transcriptional silencing. Mediates ubiquitination with the E2 ubiquitin-conjugating enzymes UBC11, UBC8 and UBC8 homologs (e.g. UBC10, UBC11, UBC28 and UBC29) but not with UBC27, UBC30, UBC32, UBC34 and UBC36. Promotes methylation-mediated gene silencing leading, for example, to early flowering. Can bind to CpG, CpNpG, and CpNpN DNA motifs, with a strong preference for methylated forms, and with highest affinity for CpG substrate. The protein is E3 ubiquitin-protein ligase ORTHRUS 1 (ORTH1) of Arabidopsis thaliana (Mouse-ear cress).